Here is a 257-residue protein sequence, read N- to C-terminus: 3-methyl-2-oxobutanoate hydroxymethyltransferase (257 aa).

Residues Asp42 and Asp86 each contribute to the Mg(2+) site. Residues Asp42 to Ser43, Asp86, and Lys116 each bind 3-methyl-2-oxobutanoate. Residue Glu118 coordinates Mg(2+). The active-site Proton acceptor is Glu185.

The protein belongs to the PanB family. In terms of assembly, homodecamer; pentamer of dimers. Mg(2+) is required as a cofactor.

Its subcellular location is the cytoplasm. The catalysed reaction is 3-methyl-2-oxobutanoate + (6R)-5,10-methylene-5,6,7,8-tetrahydrofolate + H2O = 2-dehydropantoate + (6S)-5,6,7,8-tetrahydrofolate. It functions in the pathway cofactor biosynthesis; (R)-pantothenate biosynthesis; (R)-pantoate from 3-methyl-2-oxobutanoate: step 1/2. Catalyzes the reversible reaction in which hydroxymethyl group from 5,10-methylenetetrahydrofolate is transferred onto alpha-ketoisovalerate to form ketopantoate. The protein is 3-methyl-2-oxobutanoate hydroxymethyltransferase of Prochlorococcus marinus (strain AS9601).